Here is a 513-residue protein sequence, read N- to C-terminus: ATP synthase subunit alpha 2 (513 aa).

169–176 (GDRQTGKT) contacts ATP.

The protein belongs to the ATPase alpha/beta chains family. As to quaternary structure, F-type ATPases have 2 components, CF(1) - the catalytic core - and CF(0) - the membrane proton channel. CF(1) has five subunits: alpha(3), beta(3), gamma(1), delta(1), epsilon(1). CF(0) has three main subunits: a(1), b(2) and c(9-12). The alpha and beta chains form an alternating ring which encloses part of the gamma chain. CF(1) is attached to CF(0) by a central stalk formed by the gamma and epsilon chains, while a peripheral stalk is formed by the delta and b chains.

The protein resides in the cell inner membrane. It carries out the reaction ATP + H2O + 4 H(+)(in) = ADP + phosphate + 5 H(+)(out). In terms of biological role, produces ATP from ADP in the presence of a proton gradient across the membrane. The alpha chain is a regulatory subunit. In Pseudoalteromonas atlantica (strain T6c / ATCC BAA-1087), this protein is ATP synthase subunit alpha 2.